The following is a 331-amino-acid chain: Protein C10 (331 aa).

The protein belongs to the poxviridae C4/C10 protein family.

The sequence is that of Protein C10 from Vaccinia virus (strain Copenhagen) (VACV).